The following is a 183-amino-acid chain: CASP-like protein UU2 (183 aa).

Residues 1–33 (MEESQQQSSKFDAPPSPYVPSRVYLAQIYWKKP) lie on the Cytoplasmic side of the membrane. A helical membrane pass occupies residues 34–54 (AIVVLRVLQFIFSLIAFSVMA). Over 55-72 (DVLHDVQGSIKSLSYTVA) the chain is Extracellular. Residues 73–93 (IGVLACAYALAQLSFSLWCVI) traverse the membrane as a helical segment. At 94–118 (RGATSSAGVTPLYQYATFICDQMST) the chain is on the cytoplasmic side. The chain crosses the membrane as a helical span at residues 119–139 (YFLISAASATATLIDVSGVCG). The Extracellular portion of the chain corresponds to 140-156 (SNGSGTNLCSRSTASVT). The N-linked (GlcNAc...) asparagine glycan is linked to asparagine 141. Residues 157–177 (FAFLAFLAFSASSVLTGYYLV) form a helical membrane-spanning segment. Residues 178–183 (KCILKA) lie on the Cytoplasmic side of the membrane.

Belongs to the Casparian strip membrane proteins (CASP) family. In terms of assembly, homodimer and heterodimers.

It localises to the cell membrane. The chain is CASP-like protein UU2 from Selaginella moellendorffii (Spikemoss).